The following is a 158-amino-acid chain: Lipoprotein signal peptidase (158 aa).

3 consecutive transmembrane segments (helical) span residues 4–24 (KYYI…DQVT), 63–83 (KMGF…LFYI), and 88–108 (YNLF…GNFI). Active-site residues include Asp-118 and Asp-136. Residues 131–151 (IFNVADSSLTIGVLFIIIALL) traverse the membrane as a helical segment.

It belongs to the peptidase A8 family.

It is found in the cell membrane. It carries out the reaction Release of signal peptides from bacterial membrane prolipoproteins. Hydrolyzes -Xaa-Yaa-Zaa-|-(S,diacylglyceryl)Cys-, in which Xaa is hydrophobic (preferably Leu), and Yaa (Ala or Ser) and Zaa (Gly or Ala) have small, neutral side chains.. The protein operates within protein modification; lipoprotein biosynthesis (signal peptide cleavage). Its function is as follows. This protein specifically catalyzes the removal of signal peptides from prolipoproteins. The polypeptide is Lipoprotein signal peptidase (Staphylococcus haemolyticus (strain JCSC1435)).